A 107-amino-acid polypeptide reads, in one-letter code: Putative regulatory protein BCG9842_A0044 (107 aa).

This sequence belongs to the RemA family.

The protein is Putative regulatory protein BCG9842_A0044 of Bacillus cereus (strain G9842).